A 157-amino-acid polypeptide reads, in one-letter code: Endoribonuclease YbeY (157 aa).

Zn(2+) is bound by residues His118, His122, and His128.

The protein belongs to the endoribonuclease YbeY family. Requires Zn(2+) as cofactor.

It localises to the cytoplasm. Single strand-specific metallo-endoribonuclease involved in late-stage 70S ribosome quality control and in maturation of the 3' terminus of the 16S rRNA. The polypeptide is Endoribonuclease YbeY (Bordetella parapertussis (strain 12822 / ATCC BAA-587 / NCTC 13253)).